The chain runs to 134 residues: Rhoptry antigen protein (134 aa).

Disordered stretches follow at residues 21–82 and 96–134; these read MGPL…SNLK and QLDK…ENEL. Over residues 29–38 the composition is skewed to polar residues; the sequence is KSTSAASTSD. The span at 39–54 shows a compositional bias: low complexity; it reads ELSGSEGPSTESTSTG. The span at 57–69 shows a compositional bias: basic and acidic residues; the sequence is GEDKTTDNTYKEM. The segment covering 102–113 has biased composition (basic residues); the sequence is PKKKKSKRKKKR. Basic and acidic residues predominate over residues 114–126; it reads DSSSDRILLEESK.

This is Rhoptry antigen protein from Plasmodium falciparum.